The chain runs to 367 residues: Isoflavone 4'-O-methyltransferase (367 aa).

S-adenosyl-L-methionine is bound by residues 209–212, aspartate 233, 233–234, 253–254, and lysine 267; these read VGGG, DQ, and DM. Catalysis depends on histidine 271, which acts as the Proton acceptor.

The protein belongs to the class I-like SAM-binding methyltransferase superfamily. Cation-independent O-methyltransferase family. COMT subfamily.

The catalysed reaction is a 4'-hydroxyisoflavone + S-adenosyl-L-methionine = a 4'-methoxyisoflavone + S-adenosyl-L-homocysteine + H(+). It carries out the reaction (2R,3S)-2,4',7-trihydroxyisoflavanone + S-adenosyl-L-methionine = (2R,3S)-2,7-dihydroxy-4'-methoxyisoflavanone + S-adenosyl-L-homocysteine + H(+). In terms of biological role, 2-hydroxyisoflavanone 4'-O-methyltransferase involved in the biosynthesis of formononetin. Can use 2,7,4'-trihydroxyisoflavanone, (+)-6a-hydroxymaackiain or medicarpin as substrate, but not daidzein or (-)-6a-hydroxymaackiain. The protein is Isoflavone 4'-O-methyltransferase (HI4'OMT) of Glycyrrhiza echinata (Licorice).